A 109-amino-acid chain; its full sequence is Cell division protein ZapA (109 aa).

Residues 21 to 99 are a coiled coil; that stretch reads PDQRDALNQA…IEQALLEQGR (79 aa).

The protein belongs to the ZapA family. Type 1 subfamily. As to quaternary structure, homodimer. Interacts with FtsZ.

The protein resides in the cytoplasm. Activator of cell division through the inhibition of FtsZ GTPase activity, therefore promoting FtsZ assembly into bundles of protofilaments necessary for the formation of the division Z ring. It is recruited early at mid-cell but it is not essential for cell division. The polypeptide is Cell division protein ZapA (Shigella boydii serotype 18 (strain CDC 3083-94 / BS512)).